We begin with the raw amino-acid sequence, 47 residues long: Large ribosomal subunit protein bL32c (47 aa).

This sequence belongs to the bacterial ribosomal protein bL32 family.

Its subcellular location is the plastid. This chain is Large ribosomal subunit protein bL32c (rpl32), found in Prototheca wickerhamii.